The chain runs to 330 residues: DNA-directed RNA polymerase subunit alpha (330 aa).

An alpha N-terminal domain (alpha-NTD) region spans residues 1-232 (MAILAFQKPE…SHFSLFAENK (232 aa)). Positions 248–330 (EDSLHMRQLL…DISKYKLDKD (83 aa)) are alpha C-terminal domain (alpha-CTD).

This sequence belongs to the RNA polymerase alpha chain family. As to quaternary structure, homodimer. The RNAP catalytic core consists of 2 alpha, 1 beta, 1 beta' and 1 omega subunit. When a sigma factor is associated with the core the holoenzyme is formed, which can initiate transcription.

The enzyme catalyses RNA(n) + a ribonucleoside 5'-triphosphate = RNA(n+1) + diphosphate. In terms of biological role, DNA-dependent RNA polymerase catalyzes the transcription of DNA into RNA using the four ribonucleoside triphosphates as substrates. In Porphyromonas gingivalis (strain ATCC BAA-308 / W83), this protein is DNA-directed RNA polymerase subunit alpha.